Consider the following 82-residue polypeptide: Ice-structuring protein A (82 aa).

An N-terminal signal peptide occupies residues 1–23; the sequence is MALSLFTVGQLIFLFWTMRITEA. Positions 24–44 are cleaved as a propeptide — removed by a dipeptidylpeptidase; it reads SPDPAAKAAPAAAAAPAAAAP. Position 81 is an arginine amide (arginine 81).

This sequence belongs to the type-I AFP family. In terms of tissue distribution, detected in liver and in blood serum (at protein level).

The protein resides in the secreted. Its function is as follows. Contributes to protect fish blood from freezing at subzero sea water temperatures. Lowers the blood freezing point. Binds to nascent ice crystals and prevents further growth. This is Ice-structuring protein A from Pseudopleuronectes americanus (Winter flounder).